The following is a 604-amino-acid chain: Prostaglandin G/H synthase 2 (604 aa).

Positions 1-17 (MLARALLLCVALALGHA) are cleaved as a signal peptide. Residues 18–55 (ANPCCSNPCQNRGVCMSVGFDQYQCDCTRTGFYGENCS) enclose the EGF-like domain. 4 cysteine pairs are disulfide-bonded: C21–C32, C22–C145, C26–C42, and C44–C54. N-linked (GlcNAc...) asparagine glycosylation occurs at N53. Position 106 (R106) interacts with substrate. A glycan (N-linked (GlcNAc...) asparagine) is linked at N130. Catalysis depends on H193, which acts as the Proton acceptor. Position 341 (Y341) interacts with substrate. The active-site For cyclooxygenase activity is the Y371. H374 serves as a coordination point for heme b. N396 carries N-linked (GlcNAc...) asparagine glycosylation. At C526 the chain carries S-nitrosocysteine. Residues C555 and C561 are joined by a disulfide bond. The N-linked (GlcNAc...) asparagine glycan is linked to N580.

This sequence belongs to the prostaglandin G/H synthase family. As to quaternary structure, homodimer. It depends on heme b as a cofactor. S-nitrosylation by NOS2 (iNOS) activates enzyme activity. S-nitrosylation may take place on different Cys residues in addition to Cys-526.

It is found in the microsome membrane. It localises to the endoplasmic reticulum membrane. Its subcellular location is the nucleus inner membrane. The protein localises to the nucleus outer membrane. The enzyme catalyses (5Z,8Z,11Z,14Z)-eicosatetraenoate + AH2 + 2 O2 = prostaglandin H2 + A + H2O. It carries out the reaction (5Z,8Z,11Z,14Z)-eicosatetraenoate + 2 O2 = prostaglandin G2. It catalyses the reaction prostaglandin G2 + AH2 = prostaglandin H2 + A + H2O. The catalysed reaction is (5Z,8Z,11Z,14Z,17Z)-eicosapentaenoate + 2 O2 = prostaglandin G3. The enzyme catalyses prostaglandin G3 + AH2 = prostaglandin H3 + A + H2O. It carries out the reaction (8Z,11Z,14Z)-eicosatrienoate + 2 O2 = prostaglandin G1. It catalyses the reaction prostaglandin G1 + AH2 = prostaglandin H1 + A + H2O. The catalysed reaction is 2-(5Z,8Z,11Z,14Z)-eicosatetraenoyl-sn-glycero-3-phosphoethanolamine + 2 O2 = 2-(prostaglandin G2)-sn-glycero-3-phosphoethanolamine. The enzyme catalyses 2-(prostaglandin G2)-sn-glycero-3-phosphoethanolamine + AH2 = 2-(prostaglandin H2)-sn-glycero-3-phosphoethanolamine + A + H2O. It carries out the reaction 2-(5Z,8Z,11Z,14Z)-eicosatetraenoyl-sn-glycero-3-phosphocholine + 2 O2 = 2-(prostaglandin G2)-sn-glycero-3-phosphocholine. It catalyses the reaction 2-(prostaglandin G2)-sn-glycero-3-phosphocholine + AH2 = 2-(prostaglandin H2)-sn-glycero-3-phosphocholine + A + H2O. The catalysed reaction is (15S)-hydroperoxy-(5Z,8Z,11Z,13E)-eicosatetraenoate + AH2 = (15S)-hydroxy-(5Z,8Z,11Z,13E)-eicosatetraenoate + A + H2O. The enzyme catalyses 2-(5Z,8Z,11Z,14Z)-eicosatetraenoyl-sn-glycero-3-phosphocholine + AH2 + O2 = 2-[(15S)-hydroxy-(5Z,8Z,11Z,13E)-eicosatetraenoyl]-sn-glycero-3-phosphocholine + A + H2O. It carries out the reaction 2-(5Z,8Z,11Z,14Z)-eicosatetraenoyl-sn-glycero-3-phosphocholine + AH2 + O2 = 2-[(15R)-hydroxy-(5Z,8Z,11Z,13E)-eicosatetraenoyl]-sn-glycero-3-phosphocholine + A + H2O. It catalyses the reaction 2-(5Z,8Z,11Z,14Z)-eicosatetraenoyl-sn-glycero-3-phosphocholine + AH2 + O2 = 2-[(11R)-hydroxy-(5Z,8Z,12E,14Z)-eicosatetraenoyl]-sn-glycero-3-phosphocholine + A + H2O. The catalysed reaction is (9Z,12Z)-octadecadienoate + AH2 + O2 = 9-hydroxy-(10E,12Z)-octadecadienoate + A + H2O. The enzyme catalyses (9Z,12Z)-octadecadienoate + AH2 + O2 = 13-hydroxy-(9Z,11E)-octadecadienoate + A + H2O. It carries out the reaction (5Z,8Z,11Z,14Z)-eicosatetraenoate + AH2 + O2 = (15R)-hydroxy-(5Z,8Z,11Z,13E)-eicosatetraenoate + A + H2O. It catalyses the reaction (5Z,8Z,11Z,14Z)-eicosatetraenoate + AH2 + O2 = (11R)-hydroxy-(5Z,8Z,12E,14Z)-eicosatetraenoate + A + H2O. The catalysed reaction is (5Z,8Z,11Z,14Z,17Z)-eicosapentaenoate + AH2 + O2 = (11R)-hydroxy-(5Z,8Z,12E,14Z,17Z)-eicosapentaenoate + A + H2O. The enzyme catalyses (5Z,8Z,11Z,14Z,17Z)-eicosapentaenoate + AH2 + O2 = (18S)-hydroxy-(5Z,8Z,11Z,14Z,16E)-eicosapentaenoate + A + H2O. It carries out the reaction (5Z,8Z,11Z,14Z,17Z)-eicosapentaenoate + AH2 + O2 = (18R)-hydroxy-(5Z,8Z,11Z,14Z,16E)-eicosapentaenoate + A + H2O. It catalyses the reaction (5Z,8Z,11Z,14Z,17Z)-eicosapentaenoate + AH2 + O2 = (15R)-hydroxy-(5Z,8Z,11Z,13E,17Z)-eicosapentaenoate + A + H2O. The catalysed reaction is (5Z,8Z,11Z,14Z,17Z)-eicosapentaenoate + AH2 + O2 = (15S)-hydroxy-(5Z,8Z,11Z,13E,17Z)-eicosapentaenoate + A + H2O. The enzyme catalyses (7Z,10Z,13Z,16Z,19Z)-docosapentaenoate + AH2 + O2 = 13R-hydroxy-(7Z,10Z,14E,16Z,19Z)-docosapentaenoate + A + H2O. It carries out the reaction (4Z,7Z,10Z,13Z,16Z,19Z)-docosahexaenoate + AH2 + O2 = 13-hydroxy-(4Z,7Z,10Z,14E,16Z,19Z)-docosahexaenoate + A + H2O. It catalyses the reaction (5S)-hydroxy-(6E,8Z,11Z,14Z)-eicosatetraenoate + AH2 + O2 = (5S,15R)-dihydroxy-(6E,8Z,11Z,13E)-eicosatetraenoate + A + H2O. The catalysed reaction is (4Z,7Z,10Z,13Z,16Z,19Z)-docosahexaenoate + AH2 + O2 = 17R-hydroxy-(4Z,7Z,10Z,13Z,15E,19Z)-docosahexaenoate + A + H2O. The enzyme catalyses (5S)-hydroxy-(6E,8Z,11Z,14Z)-eicosatetraenoate + AH2 + O2 = (5S,15S)-dihydroxy-(6E,8Z,11Z,13E)-eicosatetraenoate + A + H2O. It carries out the reaction (5S)-hydroxy-(6E,8Z,11Z,14Z)-eicosatetraenoate + AH2 + O2 = (5S,11R)-dihydroxy-(6E,8Z,12E,14Z)-eicosatetraenoate + A + H2O. It catalyses the reaction 2-(5Z,8Z,11Z,14Z-eicosatetraenoyl)-glycerol + 2 O2 = 2-glyceryl-prostaglandin G2. The catalysed reaction is 2-glyceryl-prostaglandin G2 + AH2 = 2-glyceryl-prostaglandin H2 + A + H2O. The enzyme catalyses (5Z,8Z,11Z,14Z)-eicosatetraenoate + O2 = (15R)-hydroperoxy-(5Z,8Z,11Z,13E)-eicosatetraenoate. It carries out the reaction (5Z,8Z,11Z,14Z)-eicosatetraenoate + O2 = 11R-hydroperoxy-(5Z,8Z,12E,14Z)-eicosatetraenoate. It catalyses the reaction (9Z,12Z)-octadecadienoate + AH2 + O2 = (9R)-hydroxy-(10E,12Z)-octadecadienoate + A + H2O. The catalysed reaction is (9Z,12Z)-octadecadienoate + AH2 + O2 = (9S)-hydroxy-(10E,12Z)-octadecadienoate + A + H2O. The enzyme catalyses (9Z,12Z)-octadecadienoate + AH2 + O2 = (13S)-hydroxy-(9Z,11E)-octadecadienoate + A + H2O. It carries out the reaction (9Z,12Z)-octadecadienoate + AH2 + O2 = (13R)-hydroxy-(9Z,11E)-octadecadienoate + A + H2O. Its pathway is lipid metabolism; prostaglandin biosynthesis. Dual cyclooxygenase and peroxidase in the biosynthesis pathway of prostanoids, a class of C20 oxylipins mainly derived from arachidonate ((5Z,8Z,11Z,14Z)-eicosatetraenoate, AA, C20:4(n-6)), with a particular role in the inflammatory response. The cyclooxygenase activity oxygenates AA to the hydroperoxy endoperoxide prostaglandin G2 (PGG2), and the peroxidase activity reduces PGG2 to the hydroxy endoperoxide prostaglandin H2 (PGH2), the precursor of all 2-series prostaglandins and thromboxanes. This complex transformation is initiated by abstraction of hydrogen at carbon 13 (with S-stereochemistry), followed by insertion of molecular O2 to form the endoperoxide bridge between carbon 9 and 11 that defines prostaglandins. The insertion of a second molecule of O2 (bis-oxygenase activity) yields a hydroperoxy group in PGG2 that is then reduced to PGH2 by two electrons. Similarly catalyzes successive cyclooxygenation and peroxidation of dihomo-gamma-linoleate (DGLA, C20:3(n-6)) and eicosapentaenoate (EPA, C20:5(n-3)) to corresponding PGH1 and PGH3, the precursors of 1- and 3-series prostaglandins. In an alternative pathway of prostanoid biosynthesis, converts 2-arachidonoyl lysophopholipids to prostanoid lysophopholipids, which are then hydrolyzed by intracellular phospholipases to release free prostanoids. Metabolizes 2-arachidonoyl glycerol yielding the glyceryl ester of PGH2, a process that can contribute to pain response. Generates lipid mediators from n-3 and n-6 polyunsaturated fatty acids (PUFAs) via a lipoxygenase-type mechanism. Oxygenates PUFAs to hydroperoxy compounds and then reduces them to corresponding alcohols. Plays a role in the generation of resolution phase interaction products (resolvins) during both sterile and infectious inflammation. Metabolizes docosahexaenoate (DHA, C22:6(n-3)) to 17R-HDHA, a precursor of the D-series resolvins (RvDs). As a component of the biosynthetic pathway of E-series resolvins (RvEs), converts eicosapentaenoate (EPA, C20:5(n-3)) primarily to 18S-HEPE that is further metabolized by ALOX5 and LTA4H to generate 18S-RvE1 and 18S-RvE2. In vascular endothelial cells, converts docosapentaenoate (DPA, C22:5(n-3)) to 13R-HDPA, a precursor for 13-series resolvins (RvTs) shown to activate macrophage phagocytosis during bacterial infection. In activated leukocytes, contributes to oxygenation of hydroxyeicosatetraenoates (HETE) to diHETES (5,15-diHETE and 5,11-diHETE). Can also use linoleate (LA, (9Z,12Z)-octadecadienoate, C18:2(n-6)) as substrate and produce hydroxyoctadecadienoates (HODEs) in a regio- and stereospecific manner, being (9R)-HODE ((9R)-hydroxy-(10E,12Z)-octadecadienoate) and (13S)-HODE ((13S)-hydroxy-(9Z,11E)-octadecadienoate) its major products. During neuroinflammation, plays a role in neuronal secretion of specialized preresolving mediators (SPMs) 15R-lipoxin A4 that regulates phagocytic microglia. This Equus caballus (Horse) protein is Prostaglandin G/H synthase 2 (PTGS2).